The chain runs to 115 residues: UPF0342 protein Bsph_0375 (115 aa).

This sequence belongs to the UPF0342 family.

This Lysinibacillus sphaericus (strain C3-41) protein is UPF0342 protein Bsph_0375.